Here is a 283-residue protein sequence, read N- to C-terminus: 4-diphosphocytidyl-2-C-methyl-D-erythritol kinase (283 aa).

The active site involves lysine 10. 95–105 (PVAAGLGGGSS) is a binding site for ATP. Aspartate 137 is an active-site residue.

Belongs to the GHMP kinase family. IspE subfamily.

The enzyme catalyses 4-CDP-2-C-methyl-D-erythritol + ATP = 4-CDP-2-C-methyl-D-erythritol 2-phosphate + ADP + H(+). The protein operates within isoprenoid biosynthesis; isopentenyl diphosphate biosynthesis via DXP pathway; isopentenyl diphosphate from 1-deoxy-D-xylulose 5-phosphate: step 3/6. In terms of biological role, catalyzes the phosphorylation of the position 2 hydroxy group of 4-diphosphocytidyl-2C-methyl-D-erythritol. This is 4-diphosphocytidyl-2-C-methyl-D-erythritol kinase from Limosilactobacillus fermentum (strain NBRC 3956 / LMG 18251) (Lactobacillus fermentum).